Reading from the N-terminus, the 177-residue chain is MAKEIKKIISIPEGVTVTFEKNVLSASGPKGTNTRFLWYPGVNIEVNGSEIIVDSASSRKKQKAMVGTYTSHITNMMKGVVDGFEYHMKVVYSHFPMQIKVNGKKFVINNFLGEKKPRVSNILGETSVKASGDEVIVSGINKEDVGQTAANIEQKTKIKRFDPRVFQDGIYIVDKRV.

The protein belongs to the universal ribosomal protein uL6 family. As to quaternary structure, part of the 50S ribosomal subunit.

This protein binds to the 23S rRNA, and is important in its secondary structure. It is located near the subunit interface in the base of the L7/L12 stalk, and near the tRNA binding site of the peptidyltransferase center. This chain is Large ribosomal subunit protein uL6, found in Methanococcoides burtonii (strain DSM 6242 / NBRC 107633 / OCM 468 / ACE-M).